The sequence spans 494 residues: Hepatic triacylglycerol lipase (494 aa).

The signal sequence occupies residues 1–21 (MGNHLQISVSLVLCIFIQSSA). N-linked (GlcNAc...) asparagine glycosylation occurs at Asn79. Ser169 (nucleophile) is an active-site residue. The active-site Charge relay system is Asp195. An essential for determining substrate specificity region spans residues 255-278 (CHFLELYKHIAEHGLNAITQTINC). His280 acts as the Charge relay system in catalysis. The region spanning 353-487 (YHYQFKIQFI…HPTQEKVFVK (135 aa)) is the PLAT domain. Asn398 carries N-linked (GlcNAc...) asparagine glycosylation.

It belongs to the AB hydrolase superfamily. Lipase family. In terms of assembly, homodimer.

It is found in the secreted. The catalysed reaction is a triacylglycerol + H2O = a diacylglycerol + a fatty acid + H(+). The enzyme catalyses a 1-acyl-sn-glycero-3-phosphocholine + H2O = sn-glycerol 3-phosphocholine + a fatty acid + H(+). It catalyses the reaction a 1,2-diacyl-sn-glycero-3-phosphocholine + H2O = a 2-acyl-sn-glycero-3-phosphocholine + a fatty acid + H(+). It carries out the reaction 1,2-di-(9Z-octadecenoyl)-sn-glycerol + H2O = 2-(9Z-octadecenoyl)-glycerol + (9Z)-octadecenoate + H(+). The catalysed reaction is 1,2,3-tri-(9Z-octadecenoyl)-glycerol + H2O = 2,3-di-(9Z)-octadecenoyl-sn-glycerol + (9Z)-octadecenoate + H(+). The enzyme catalyses 1-(9Z-octadecenoyl)-sn-glycero-3-phospho-L-serine + H2O = sn-glycero-3-phospho-L-serine + (9Z)-octadecenoate + H(+). It catalyses the reaction 1-hexadecanoyl-sn-glycero-3-phosphocholine + H2O = sn-glycerol 3-phosphocholine + hexadecanoate + H(+). It carries out the reaction 1,3-di-(9Z-octadecenoyl)-glycerol + H2O = 3-(9Z-octadecenoyl)-sn-glycerol + (9Z)-octadecenoate + H(+). The catalysed reaction is 1,2,3-tri-(9Z-octadecenoyl)-glycerol + H2O = di-(9Z)-octadecenoylglycerol + (9Z)-octadecenoate + H(+). The enzyme catalyses 1,2-di-(9Z-octadecenoyl)-sn-glycero-3-phosphocholine + H2O = (9Z-octadecenoyl)-sn-glycero-3-phosphocholine + (9Z)-octadecenoate + H(+). It catalyses the reaction 1,2,3-tributanoylglycerol + H2O = dibutanoylglycerol + butanoate + H(+). It carries out the reaction 1,2-dihexadecanoyl-sn-glycero-3-phosphocholine + H2O = hexadecanoyl-sn-glycero-3-phosphocholine + hexadecanoate + H(+). Phospholipase A1 and lysophospholipase activities are inhibited by annexin II. Functionally, catalyzes the hydrolysis of triglycerides and phospholipids present in circulating plasma lipoproteins, including chylomicrons, intermediate density lipoproteins (IDL), low density lipoproteins (LDL) of large size and high density lipoproteins (HDL), releasing free fatty acids (FFA) and smaller lipoprotein particles. Also exhibits lysophospholipase activity. Can hydrolyze both neutral lipid and phospholipid substrates but shows a greater binding affinity for neutral lipid substrates than phospholipid substrates. In native LDL, preferentially hydrolyzes the phosphatidylcholine species containing polyunsaturated fatty acids at sn-2 position. In Rattus norvegicus (Rat), this protein is Hepatic triacylglycerol lipase (Lipc).